Here is a 336-residue protein sequence, read N- to C-terminus: MNSIAHSTLAAASPTIRHDWTREEAAAIYHAPFADLMFRAQTIHRQTFDPNQVQCNQLLNVKTGGCAEDCGYCSQSAHHDTALPASKLMEPAKVIEAAKAARDAGATRYCMGAAWRSPKERDMAPVIEMVKGVKALGMEACMTLGMLTDDQAKQLADAGLDYYNHNIDTSEEFYASVVKSRSFGDRLDTLEKVQDAGIKVCCGGILGLGEKPTDRVEMLRTLANLPQHPESVPINMLIPIEGTPIAKTATPVDPFEFVRTIALARIMMPKSDVRLAAGRTAMSDEMQALCFLAGANSIFIGDTLLTTPNPGDSKDRALFNRLGITPRDDLGVHAHS.

The Radical SAM core domain occupies 51–270 (NQVQCNQLLN…IALARIMMPK (220 aa)). 3 residues coordinate [4Fe-4S] cluster: Cys-66, Cys-70, and Cys-73. [2Fe-2S] cluster is bound by residues Cys-110, Cys-141, Cys-201, and Arg-274.

It belongs to the radical SAM superfamily. Biotin synthase family. As to quaternary structure, homodimer. [4Fe-4S] cluster serves as cofactor. It depends on [2Fe-2S] cluster as a cofactor.

It carries out the reaction (4R,5S)-dethiobiotin + (sulfur carrier)-SH + 2 reduced [2Fe-2S]-[ferredoxin] + 2 S-adenosyl-L-methionine = (sulfur carrier)-H + biotin + 2 5'-deoxyadenosine + 2 L-methionine + 2 oxidized [2Fe-2S]-[ferredoxin]. It participates in cofactor biosynthesis; biotin biosynthesis; biotin from 7,8-diaminononanoate: step 2/2. In terms of biological role, catalyzes the conversion of dethiobiotin (DTB) to biotin by the insertion of a sulfur atom into dethiobiotin via a radical-based mechanism. The sequence is that of Biotin synthase from Rhodopseudomonas palustris (strain ATCC BAA-98 / CGA009).